The following is a 111-amino-acid chain: Natriuretic peptide TNP-b (111 aa).

The first 27 residues, 1–27 (MVGLSRLAGGGLLLLLLLALLPLALDG), serve as a signal peptide directing secretion. Residues 28-71 (KPAPLPQALPEALAGGTTALRRDVTEEQQQQLVAEESSGPAAGR) constitute a propeptide that is removed on maturation. 2 disordered regions span residues 51–77 (VTEE…PKIG) and 92–111 (SGLG…PGGS). Cysteines 80 and 96 form a disulfide. Positions 107–111 (IPGGS) are excised as a propeptide.

This sequence belongs to the natriuretic peptide family. Expressed by the venom gland.

It is found in the secreted. In terms of biological role, snake venom natriuretic peptide that exhibits vasoactive and probable hypotensive activity. Is only weakly active on natriuretic peptide receptor-C (NPR3). This chain is Natriuretic peptide TNP-b, found in Oxyuranus scutellatus scutellatus (Australian taipan).